The primary structure comprises 203 residues: Sperm-specific protein PHI-2B/PHI-3 (203 aa).

Over residues 1–35 (MPSPSRKSRSRSRSRSKSPKRSPAKKARKTPKKPR) the composition is skewed to basic residues. 2 disordered regions span residues 1–46 (MPSP…PSTL) and 104–203 (KTSA…KSKK). The H15 domain maps to 41–120 (KKPSTLSMIV…GATGSFRVGK (80 aa)). 2 stretches are compositionally biased toward basic residues: residues 126–140 (KKAK…KSSK) and 147–203 (KAKK…KSKK).

PL-II* and PL-IV are produced by post-translational cleavage of a common precursor. As to expression, sperm.

It is found in the nucleus. The protein localises to the chromosome. In terms of biological role, linker histones are implicated in chromatin remodeling and/or transcriptional regulation during spermiogenesis, the process of spermatid maturation into spermatozoa. Protamines substitute for histones in the chromatin of sperm during the haploid phase of spermatogenesis. They compact sperm DNA into a highly condensed, stable and inactive complex. In Mytilus trossulus (Blue mussel), this protein is Sperm-specific protein PHI-2B/PHI-3.